A 987-amino-acid chain; its full sequence is Kinesin-like protein KIN-14G (987 aa).

The Calponin-homology (CH) domain maps to 44-163 (SLRRYEAAGW…CILALKSYSE (120 aa)). Residues 201-221 (ISRTQSTDMLSTDQPLSSDGD) are disordered. The 328-residue stretch at 394–721 (NIRVYCRVRP…LKFAERVGSV (328 aa)) folds into the Kinesin motor domain. 478–485 (GQTGSGKT) provides a ligand contact to ATP. The stretch at 725 to 754 (AARVNKDNSEVKELKEQIANLKMALVRKGN) forms a coiled coil. Disordered regions lie at residues 759–849 (QPTA…ESKS) and 927–987 (NIQN…SLGT). Polar residues predominate over residues 788–797 (MGNTSNNSRP). The span at 840–849 (GKDEDRESKS) shows a compositional bias: basic and acidic residues. Residues 964–974 (PPNTVNSQPQR) show a composition bias toward polar residues.

This sequence belongs to the TRAFAC class myosin-kinesin ATPase superfamily. Kinesin family. KIN-14 subfamily. In terms of assembly, monomer. As to expression, flower specific.

Its subcellular location is the cytoplasm. It localises to the cytoskeleton. Its function is as follows. Microtubule-binding motor protein. This is Kinesin-like protein KIN-14G from Arabidopsis thaliana (Mouse-ear cress).